The chain runs to 214 residues: Holliday junction branch migration complex subunit RuvA (214 aa).

Residues 1-63 form a domain I region; the sequence is MIASLSGTVE…EDALTLYGFA (63 aa). The segment at 64–142 is domain II; it reads DRDEREVFEV…PTGEPVPGAE (79 aa). Residues 143 to 151 are flexible linker; the sequence is AEASDEPAV. The segment at 151-214 is domain III; the sequence is VETVWHADVV…GMAGAVRGGR (64 aa).

This sequence belongs to the RuvA family. In terms of assembly, homotetramer. Forms an RuvA(8)-RuvB(12)-Holliday junction (HJ) complex. HJ DNA is sandwiched between 2 RuvA tetramers; dsDNA enters through RuvA and exits via RuvB. An RuvB hexamer assembles on each DNA strand where it exits the tetramer. Each RuvB hexamer is contacted by two RuvA subunits (via domain III) on 2 adjacent RuvB subunits; this complex drives branch migration. In the full resolvosome a probable DNA-RuvA(4)-RuvB(12)-RuvC(2) complex forms which resolves the HJ.

Its subcellular location is the cytoplasm. In terms of biological role, the RuvA-RuvB-RuvC complex processes Holliday junction (HJ) DNA during genetic recombination and DNA repair, while the RuvA-RuvB complex plays an important role in the rescue of blocked DNA replication forks via replication fork reversal (RFR). RuvA specifically binds to HJ cruciform DNA, conferring on it an open structure. The RuvB hexamer acts as an ATP-dependent pump, pulling dsDNA into and through the RuvAB complex. HJ branch migration allows RuvC to scan DNA until it finds its consensus sequence, where it cleaves and resolves the cruciform DNA. The polypeptide is Holliday junction branch migration complex subunit RuvA (Micrococcus luteus (strain ATCC 4698 / DSM 20030 / JCM 1464 / CCM 169 / CCUG 5858 / IAM 1056 / NBRC 3333 / NCIMB 9278 / NCTC 2665 / VKM Ac-2230) (Micrococcus lysodeikticus)).